Reading from the N-terminus, the 258-residue chain is Imidazole glycerol phosphate synthase subunit HisF (258 aa).

Catalysis depends on residues Asp-11 and Asp-130.

This sequence belongs to the HisA/HisF family. Heterodimer of HisH and HisF.

It is found in the cytoplasm. The catalysed reaction is 5-[(5-phospho-1-deoxy-D-ribulos-1-ylimino)methylamino]-1-(5-phospho-beta-D-ribosyl)imidazole-4-carboxamide + L-glutamine = D-erythro-1-(imidazol-4-yl)glycerol 3-phosphate + 5-amino-1-(5-phospho-beta-D-ribosyl)imidazole-4-carboxamide + L-glutamate + H(+). Its pathway is amino-acid biosynthesis; L-histidine biosynthesis; L-histidine from 5-phospho-alpha-D-ribose 1-diphosphate: step 5/9. Functionally, IGPS catalyzes the conversion of PRFAR and glutamine to IGP, AICAR and glutamate. The HisF subunit catalyzes the cyclization activity that produces IGP and AICAR from PRFAR using the ammonia provided by the HisH subunit. The chain is Imidazole glycerol phosphate synthase subunit HisF from Magnetococcus marinus (strain ATCC BAA-1437 / JCM 17883 / MC-1).